A 1186-amino-acid chain; its full sequence is MENKQKTATTVKVSPGPLGYVYARRLPPEGLTELALLSARSADSDTAVLPLIAGLTVESGFDVNVAVVVGSRTTGVGGTGVSLKLMPSHYAPSAYVFHGGRHLAPSSAAPNLSLLCDRARVQFGFSSFKPKPCEAEGETTGEALCEHLGLNPNESLLYMVIAEGFKEAVYISNTILHMGGVGTVTIAGEEVRRIPIYPLQMFMPDYCRAVADPFNDRHRAIGEYFAYPLPFFNAKLASLLFGAAVGPAAVALRARNVDAVARAAAHLAFDENHEGAALPADITFTAFDPTGSKAGHRNPRECGGGFEQRLASVMAGDAALALESIMSMAVFEEPPTDIGTWPMLTCQESTAARAASIGAYLGRAAGLVGAMVFSSNSALHLTEVDDAGPADPKDPTKPSFYRFFLVPGTYVAANPQLDRDGRVVAGHEGRPIVPIVGGNHEFTCEHLATLCGFSPELLAKMLYYLERCDGGVILGRPEMDTFKYVSDSAHTDVPCCLCSLDNRHSCAHTTLLRLRARHPKFTSTTRGAIGIFGVMNSAYSDCDVLGNYASFSAIKRMDVQETARAIMQETYRSAVERVMAELENLNYIDAAVPTSPAKLESIITGREALQTVVSNVKQVVDGEVAQLMRALVEGRGFRFREALGEANHAMSLTLDPHASVPCPLLQMLGRRSNLAVYQDLALSQCHGVFEGQAVEGRNFRSQFQPVLRRRVLDMFNNGFLSARTLTVALTDGACISAPGLVSGQHAAAESGFEGDVARVNLGFPKEIRVKSRVLFAGAGPAASEAARARIAGLQSAYQKSDKRVDILLGPLGFMLKQFHATLFPNGKPPGSDNPNPQWFWTALQRNQLPARLLSREDISLIAFVKRFSVEYGAGNFVNLPPNNISELAMYYMANQILKYCDHSTYFINTLTALIAGSRRPPNAQAAAAWAPRGGTELEAQARSVVANPGDHPGAWTTMFASCNLLRPVMATRPMVVLGLSISKYYGMAGNDRVFQAGNLANLLGGKNACPLLIFDRTRKFVIACPRAGFVCAAVSAGSGAHESSLCEQLRAIIAEGGATVASDVFAAAAKSLGARVQQLQIEDWLALLEDEYLSEEMMELAGRALERGGGEWSLDAALDVAREAEAMVTRHVDAEETFDFGAFAEDGPADAGLAVHLQSRRRPLACSDLFGDAPAEKRNDLTLDML.

A zinc finger lies at 495 to 508; it reads CCLCSLDNRHSCAH. Residues 839-840 carry the Required for filament formation motif; that stretch reads FW. The required for nuclear localization stretch occupies residues 1160-1186; that stretch reads RRRPLACSDLFGDAPAEKRNDLTLDML.

Belongs to the herpesviridae major DNA-binding protein family. As to quaternary structure, homooligomers. Forms double-helical filaments necessary for the formation of replication compartments within the host nucleus. Interacts with the origin-binding protein. Interacts with the helicase primase complex; this interaction stimulates primer synthesis activity of the helicase-primase complex. Interacts with the DNA polymerase. Interacts with the alkaline exonuclease; this interaction increases its nuclease processivity.

Its subcellular location is the host nucleus. Plays several crucial roles in viral infection. Participates in the opening of the viral DNA origin to initiate replication by interacting with the origin-binding protein. May disrupt loops, hairpins and other secondary structures present on ssDNA to reduce and eliminate pausing of viral DNA polymerase at specific sites during elongation. Promotes viral DNA recombination by performing strand-transfer, characterized by the ability to transfer a DNA strand from a linear duplex to a complementary single-stranded DNA circle. Can also catalyze the renaturation of complementary single strands. Additionally, reorganizes the host cell nucleus, leading to the formation of prereplicative sites and replication compartments. This process is driven by the protein which can form double-helical filaments in the absence of DNA. In Bovine herpesvirus 2 (strain BMV) (BoHV-2), this protein is Major DNA-binding protein.